Consider the following 281-residue polypeptide: Ribosomal protein L11 methyltransferase (281 aa).

S-adenosyl-L-methionine contacts are provided by Thr-133, Gly-154, Asp-175, and Asn-216.

The protein belongs to the methyltransferase superfamily. PrmA family.

It is found in the cytoplasm. The enzyme catalyses L-lysyl-[protein] + 3 S-adenosyl-L-methionine = N(6),N(6),N(6)-trimethyl-L-lysyl-[protein] + 3 S-adenosyl-L-homocysteine + 3 H(+). In terms of biological role, methylates ribosomal protein L11. This is Ribosomal protein L11 methyltransferase from Campylobacter jejuni (strain RM1221).